Consider the following 249-residue polypeptide: Probable transcriptional regulatory protein Sare_1779 (249 aa).

Belongs to the TACO1 family.

The protein resides in the cytoplasm. In Salinispora arenicola (strain CNS-205), this protein is Probable transcriptional regulatory protein Sare_1779.